A 154-amino-acid polypeptide reads, in one-letter code: Transcription antitermination protein NusB (154 aa).

Belongs to the NusB family.

Functionally, involved in transcription antitermination. Required for transcription of ribosomal RNA (rRNA) genes. Binds specifically to the boxA antiterminator sequence of the ribosomal RNA (rrn) operons. The protein is Transcription antitermination protein NusB of Hyphomonas neptunium (strain ATCC 15444).